The chain runs to 299 residues: Palmitoyltransferase ZDHHC3 (299 aa).

The Cytoplasmic segment spans residues 1-47 (MMLIPTHHFRNIERKPEYLQPEKCVPPPYPGPVGTMWFIRDGCGIAC). At Tyr18 the chain carries Phosphotyrosine. A helical transmembrane segment spans residues 48–68 (AIVTWFLVLYAEFVVLFVMLI). Topologically, residues 69-72 (PSRD) are extracellular. A helical membrane pass occupies residues 73-93 (YVYSIINGIVFNLLAFLALAS). Residues 94–171 (HCRAMLTDPG…NCVGENNQKY (78 aa)) lie on the Cytoplasmic side of the membrane. The 51-residue stretch at 127-177 (YKCPKCCSIKPDRAHHCSVCKRCIRKMDHHCPWVNNCVGENNQKYFVLFTM) folds into the DHHC domain. Residue Cys146 is the site of S-palmitoyl cysteine attachment. The active-site S-palmitoyl cysteine intermediate is the Cys157. Residues 172 to 192 (FVLFTMYIALISLHALIMVGF) traverse the membrane as a helical segment. At 193-214 (HFLHCFEEDWTKCSSFSPPTTV) the chain is on the extracellular side. The chain crosses the membrane as a helical span at residues 215–235 (ILLILLCFEGLLFLIFTSVMF). Over 236–299 (GTQVHSICTD…GKADPYQYVV (64 aa)) the chain is Cytoplasmic.

Belongs to the DHHC palmitoyltransferase family. Monomer. Homooligomers. The monomeric form has a higher catalytic activity. Forms heterooligomers with ZDHHC7. Interacts with TNFRSF10A. In terms of processing, autopalmitoylated. Phosphorylation by FGFR1 and SRC probably regulates the palmitoyltransferase activity. As to expression, widely expressed with significant expression in heart, lung, liver, skeletal muscle, kidney, testis, thymus, small intestine and leukocyte.

Its subcellular location is the golgi apparatus membrane. It carries out the reaction L-cysteinyl-[protein] + hexadecanoyl-CoA = S-hexadecanoyl-L-cysteinyl-[protein] + CoA. It catalyses the reaction L-cysteinyl-[protein] + tetradecanoyl-CoA = S-tetradecanoyl-L-cysteinyl-[protein] + CoA. The enzyme catalyses L-cysteinyl-[protein] + octadecanoyl-CoA = S-octadecanoyl-L-cysteinyl-[protein] + CoA. In terms of biological role, golgi-localized palmitoyltransferase that catalyzes the addition of palmitate onto various protein substrates. Has no stringent fatty acid selectivity and in addition to palmitate can also transfer onto target proteins myristate from tetradecanoyl-CoA and stearate from octadecanoyl-CoA. Plays an important role in G protein-coupled receptor signaling pathways involving GNAQ and potentially other heterotrimeric G proteins by regulating their dynamic association with the plasma membrane. Palmitoylates ITGA6 and ITGB4, thereby regulating the alpha-6/beta-4 integrin localization, expression and function in cell adhesion to laminin. Plays a role in the TRAIL-activated apoptotic signaling pathway most probably through the palmitoylation and localization to the plasma membrane of TNFRSF10A. In the brain, by palmitoylating the gamma subunit GABRG2 of GABA(A) receptors and regulating their postsynaptic accumulation, plays a role in synaptic GABAergic inhibitory function and GABAergic innervation. Palmitoylates the neuronal protein GAP43 which is also involved in the formation of GABAergic synapses. Palmitoylates NCDN thereby regulating its association with endosome membranes. Probably palmitoylates PRCD and is involved in its proper localization within the photoreceptor. Could mediate the palmitoylation of NCAM1 and regulate neurite outgrowth. Could palmitoylate DNAJC5 and regulate its localization to Golgi membranes. Also constitutively palmitoylates DLG4. May also palmitoylate SNAP25. Could palmitoylate the glutamate receptors GRIA1 and GRIA2 but this has not been confirmed in vivo. Could also palmitoylate the D(2) dopamine receptor DRD2. May also palmitoylate LAMTOR1, promoting its localization to lysosomal membranes. Palmitoylates the Toll-like receptor 9/TLR9 in the Golgi and thereby regulates TLR9 trafficking to endosomes. May palmitoylate CALHM1 and CALHM3 subunits of gustatory voltage-gated ion channels and modulate channel gating and kinetics. Its function is as follows. May also function as a calcium transporter. In Homo sapiens (Human), this protein is Palmitoyltransferase ZDHHC3.